The chain runs to 394 residues: Tyrosine--tRNA ligase, cytoplasmic (394 aa).

S2 is subject to N-acetylserine. Y43 contributes to the L-tyrosine binding site. The short motif at 48–56 is the 'HIGH' region element; the sequence is PTGRPHCGY. Residues Y170, Q174, D177, and Q192 each contribute to the L-tyrosine site. A 'KMSKS' region motif is present at residues 227 to 231; sequence KMSAS. S235 is modified (phosphoserine). Residues 348–394 are disordered; that stretch reads QEASEKGYPVATPQKSKKAKKPKNKGTKYPGATKTNEIATKLEETKL. Residue T359 is modified to Phosphothreonine. The Nuclear localization signal signature appears at 360-378; sequence PQKSKKAKKPKNKGTKYPG. The segment covering 362–373 has biased composition (basic residues); sequence KSKKAKKPKNKG.

The protein belongs to the class-I aminoacyl-tRNA synthetase family. Homodimer. Interacts with KNR4/SMI1.

It localises to the cytoplasm. It is found in the nucleus. The enzyme catalyses tRNA(Tyr) + L-tyrosine + ATP = L-tyrosyl-tRNA(Tyr) + AMP + diphosphate + H(+). Its activity is regulated as follows. Inhibited by N-ethylmaleimide and p-chloromercuribenzoate. Functionally, catalyzes the attachment of L-tyrosine to tRNA(Tyr) in a two-step reaction: L-tyrosine is first activated by ATP to form Tyr-AMP and then transferred to the acceptor end of tRNA(Tyr). The specificity determinants on tRNA(Tyr) are the base pair C1-G72, the discriminator residue A73, and the three anticodon bases G34, U35 and A36. Also involved in nuclear tRNA export. Also attaches D-Tyr to tRNA(Tyr), this reaction is about 150-fold less efficient than attachment of L-Tyr. The polypeptide is Tyrosine--tRNA ligase, cytoplasmic (Saccharomyces cerevisiae (strain ATCC 204508 / S288c) (Baker's yeast)).